A 250-amino-acid chain; its full sequence is Ribonuclease 3 (250 aa).

A compositionally biased stretch (basic residues) spans 1–15 (MTKTPAKKKRARSSK). A disordered region spans residues 1 to 21 (MTKTPAKKKRARSSKAKGTDA). Residues 22 to 150 (NAALEARIGH…VIGAIFLDGG (129 aa)) enclose the RNase III domain. Glutamate 63 provides a ligand contact to Mg(2+). Aspartate 67 is a catalytic residue. Positions 136 and 139 each coordinate Mg(2+). The active site involves glutamate 139. One can recognise a DRBM domain in the interval 175 to 244 (DPKTVLQEWA…ASVMIEREGV (70 aa)).

Belongs to the ribonuclease III family. In terms of assembly, homodimer. Mg(2+) is required as a cofactor.

It localises to the cytoplasm. The enzyme catalyses Endonucleolytic cleavage to 5'-phosphomonoester.. In terms of biological role, digests double-stranded RNA. Involved in the processing of primary rRNA transcript to yield the immediate precursors to the large and small rRNAs (23S and 16S). Processes some mRNAs, and tRNAs when they are encoded in the rRNA operon. Processes pre-crRNA and tracrRNA of type II CRISPR loci if present in the organism. The chain is Ribonuclease 3 from Bradyrhizobium diazoefficiens (strain JCM 10833 / BCRC 13528 / IAM 13628 / NBRC 14792 / USDA 110).